Here is a 352-residue protein sequence, read N- to C-terminus: UDP-N-acetylglucosamine--N-acetylmuramyl-(pentapeptide) pyrophosphoryl-undecaprenol N-acetylglucosamine transferase (352 aa).

Residues threonine 13–glycine 15, asparagine 125, arginine 161, serine 189, isoleucine 242, alanine 261–glutamate 266, and glutamine 286 each bind UDP-N-acetyl-alpha-D-glucosamine.

It belongs to the glycosyltransferase 28 family. MurG subfamily.

It is found in the cell inner membrane. It carries out the reaction di-trans,octa-cis-undecaprenyl diphospho-N-acetyl-alpha-D-muramoyl-L-alanyl-D-glutamyl-meso-2,6-diaminopimeloyl-D-alanyl-D-alanine + UDP-N-acetyl-alpha-D-glucosamine = di-trans,octa-cis-undecaprenyl diphospho-[N-acetyl-alpha-D-glucosaminyl-(1-&gt;4)]-N-acetyl-alpha-D-muramoyl-L-alanyl-D-glutamyl-meso-2,6-diaminopimeloyl-D-alanyl-D-alanine + UDP + H(+). The protein operates within cell wall biogenesis; peptidoglycan biosynthesis. In terms of biological role, cell wall formation. Catalyzes the transfer of a GlcNAc subunit on undecaprenyl-pyrophosphoryl-MurNAc-pentapeptide (lipid intermediate I) to form undecaprenyl-pyrophosphoryl-MurNAc-(pentapeptide)GlcNAc (lipid intermediate II). In Erwinia tasmaniensis (strain DSM 17950 / CFBP 7177 / CIP 109463 / NCPPB 4357 / Et1/99), this protein is UDP-N-acetylglucosamine--N-acetylmuramyl-(pentapeptide) pyrophosphoryl-undecaprenol N-acetylglucosamine transferase.